The chain runs to 249 residues: Probable transcriptional regulatory protein Sare_1779 (249 aa).

It belongs to the TACO1 family.

The protein resides in the cytoplasm. In Salinispora arenicola (strain CNS-205), this protein is Probable transcriptional regulatory protein Sare_1779.